The chain runs to 242 residues: Probable 2-phosphosulfolactate phosphatase (242 aa).

It belongs to the ComB family. Requires Mg(2+) as cofactor.

It catalyses the reaction (2R)-O-phospho-3-sulfolactate + H2O = (2R)-3-sulfolactate + phosphate. The chain is Probable 2-phosphosulfolactate phosphatase from Prochlorococcus marinus (strain NATL2A).